We begin with the raw amino-acid sequence, 99 residues long: uncharacterized protein (99 aa).

2 disordered regions span residues methionine 1–threonine 24 and serine 49–threonine 99. 2 stretches are compositionally biased toward basic residues: residues valine 15–threonine 24 and serine 71–arginine 81.

This is an uncharacterized protein from Streptomyces fradiae (Streptomyces roseoflavus).